A 217-amino-acid polypeptide reads, in one-letter code: Large ribosomal subunit protein uL1 (217 aa).

This sequence belongs to the universal ribosomal protein uL1 family. As to quaternary structure, part of the 50S ribosomal subunit.

Functionally, binds directly to 23S rRNA. Probably involved in E site tRNA release. In terms of biological role, protein L1 is also a translational repressor protein, it controls the translation of its operon by binding to its mRNA. In Thermoplasma acidophilum (strain ATCC 25905 / DSM 1728 / JCM 9062 / NBRC 15155 / AMRC-C165), this protein is Large ribosomal subunit protein uL1.